The chain runs to 291 residues: MAATLGKTIVATGASSGLGFESVKQLLQQSQPYKFIIGARDLKTTQAAFDQVQYDAKTHSVSILPLDLADLRTVKPFAQQTLEALDQDKLDILFLNAGMNKAATGPGLHGSKWCEAYVVNHLSQHYLTQLLRPKLSASHSRVVVVSSGLIRAVKEADIEAFETTLKADSGADGFKVYHASKFVQFLGAHWWRRQLGTSATVLAVSPGLVIGTGLGRHLDTQPNLDHIPDKVTVDKGAKSLLRAFDCNDIPEDPEQIFLTSWGEWWPKDVYSLSLDKSLQDRWCPSQEDIEA.

Residues Leu-18, Asp-67, Asn-96, Tyr-177, Lys-181, and Val-209 each contribute to the NADP(+) site. Residue Tyr-177 is the Proton acceptor of the active site. Lys-181 acts as the Lowers pKa of active site Tyr in catalysis.

The protein belongs to the short-chain dehydrogenases/reductases (SDR) family.

Its pathway is secondary metabolite biosynthesis. In terms of biological role, short-chain dehydrogenase/reductase; part of the gene cluster that mediates the biosynthesis of dibenzodioxocinones such as pestalotiollide B, a novel class of inhibitors against cholesterol ester transfer protein (CEPT). The biosynthesis initiates from condensation of acetate and malonate units catalyzed by the non-reducing PKS pks8/GME11356. Pks8/GME11356 lacks a thioesterase (TE) domain, which is important to the cyclizing of the third ring of atrochrysone carboxylic acid, and the esterase GME11355 might play the role of TE and catalyzes the cyclization reaction of the C ring. The lactamase-like protein GME11357 (or other beta-lactamases in Pestalotiopsis microspora) probably hydrolyzes the thioester bond between the ACP of pks8/GME11356 and the intermediate to release atrochrysone carboxylic acid, which is spontaneously dehydrates to form endocrocin anthrone. Endocrocin anthrone is further converted to emodin via the endocrocin intermediate. Emodin is then oxidized by several enzymes such as the Baeyer-Villiger oxidase GME11358, the oxidoreductase GME11367, the short chain dehydrogenase/reductase GME11373, as well as by other oxidoreductases from the cluster, to modify the A and C rings and open the B ring, and finally yield monodictyphenone. The prenyltransferase GME11375 may catalyze the addition reaction between the C5 side chains and the carbon bone of dibenzodioxocinones. The remaining biochemical reactions to the final product dibenzodioxocinones should be methylation catalyzed by methyltransferase GME11366 and reduction and lactonization reaction catalyzed by a series of oxidordeuctases. The polypeptide is Short-chain dehydrogenase/reductase GME11359 (Pestalotiopsis microspora).